We begin with the raw amino-acid sequence, 115 residues long: Large ribosomal subunit protein uL22 (115 aa).

It belongs to the universal ribosomal protein uL22 family. In terms of assembly, part of the 50S ribosomal subunit.

Its function is as follows. This protein binds specifically to 23S rRNA; its binding is stimulated by other ribosomal proteins, e.g. L4, L17, and L20. It is important during the early stages of 50S assembly. It makes multiple contacts with different domains of the 23S rRNA in the assembled 50S subunit and ribosome. In terms of biological role, the globular domain of the protein is located near the polypeptide exit tunnel on the outside of the subunit, while an extended beta-hairpin is found that lines the wall of the exit tunnel in the center of the 70S ribosome. The sequence is that of Large ribosomal subunit protein uL22 from Ligilactobacillus salivarius (strain UCC118) (Lactobacillus salivarius).